The primary structure comprises 132 residues: Small ribosomal subunit protein uS8 (132 aa).

It belongs to the universal ribosomal protein uS8 family. As to quaternary structure, part of the 30S ribosomal subunit. Contacts proteins S5 and S12.

In terms of biological role, one of the primary rRNA binding proteins, it binds directly to 16S rRNA central domain where it helps coordinate assembly of the platform of the 30S subunit. This chain is Small ribosomal subunit protein uS8, found in Bifidobacterium longum (strain NCC 2705).